The chain runs to 932 residues: Probable serine/threonine-protein kinase clkA (932 aa).

Positions 1-10 are enriched in basic residues; it reads MDRFQTKRKT. 3 disordered regions span residues 1 to 21, 39 to 198, and 212 to 562; these read MDRFQTKRKTYSYNGYSNNDY, YKNN…YGDT, and NDYD…TNTN. Composition is skewed to low complexity over residues 11–21 and 39–123; these read YSYNGYSNNDY and YKNN…ENNY. Polar residues predominate over residues 124-143; the sequence is FQSENQSNKDQNSYFNSSYL. Composition is skewed to low complexity over residues 148–196, 218–305, 314–342, and 351–562; these read DNYN…NSYG, NNNN…NGGN, VFNNNNNNNNNNNNNYNNYNSNNNYNNDY, and NIYS…TNTN. A Protein kinase domain is found at 590–920; that stretch reads YKVLCTVGSG…ASDALSHPFL (331 aa). Residues 596 to 604 and K619 contribute to the ATP site; that span reads VGSGTFSTV. The active-site Proton acceptor is the D719.

Belongs to the protein kinase superfamily. CMGC Ser/Thr protein kinase family.

The enzyme catalyses L-seryl-[protein] + ATP = O-phospho-L-seryl-[protein] + ADP + H(+). It catalyses the reaction L-threonyl-[protein] + ATP = O-phospho-L-threonyl-[protein] + ADP + H(+). The polypeptide is Probable serine/threonine-protein kinase clkA (clkA) (Dictyostelium discoideum (Social amoeba)).